We begin with the raw amino-acid sequence, 3859 residues long: Transformation/transcription domain-associated protein (3859 aa).

The residue at position 2 (Ala2) is an N-acetylalanine. Over residues 491–526 the composition is skewed to pro residues; sequence PAAPGPAPSPAPVPAPPPPPPPPPPATPVTPAPVPP. Residues 491-541 are disordered; that stretch reads PAAPGPAPSPAPVPAPPPPPPPPPPATPVTPAPVPPFEKQGEKDKEDKQTF. The span at 529–539 shows a compositional bias: basic and acidic residues; it reads KQGEKDKEDKQ. Residue Ser1628 is modified to Phosphoserine. The segment at 2010-2388 is interaction with TP53; that stretch reads SEVVIKWELQ…SPMAANQTPT (379 aa). The interval 2023–2044 is disordered; that stretch reads DQQPDSDMDPNSSGEGVNSVSS. Low complexity predominate over residues 2033-2044; it reads NSSGEGVNSVSS. Residues 2047–2062 carry the Bipartite nuclear localization signal motif; it reads KRGLSVDSAQEVKRFR. Ser2051 and Ser2077 each carry phosphoserine. A Glycyl lysine isopeptide (Lys-Gly) (interchain with G-Cter in SUMO2) cross-link involves residue Lys2543. Basic and acidic residues predominate over residues 2543–2554; sequence KQEPRERENSES. Residues 2543 to 2578 form a disordered region; the sequence is KQEPRERENSESKEEDVEIDIELAPGDQTSTPKTKE. The FAT domain maps to 2692 to 3275; sequence VLKYLGKTHN…YFPIRTLYLT (584 aa). Position 3078 is an N6-acetyllysine (Lys3078). Positions 3500 to 3823 constitute a PI3K/PI4K catalytic domain; it reads MPRVEIVQKH…AVTAIMTRLH (324 aa). The segment at 3506 to 3512 is G-loop; it reads VQKHNTA. Positions 3687 to 3695 are catalytic loop; the sequence is HLNRLNPEM. Positions 3707-3732 are activation loop; that stretch reads VAYFRFDINDATGDLDANRPVPFRLT. In terms of domain architecture, FATC spans 3827–3859; it reads QFEGGESKVNTLVAAANSLDNLCRMDPAWHPWL.

Belongs to the PI3/PI4-kinase family. TRA1 subfamily. In terms of assembly, interacts with MYC, E2F1 and E2F4 transcription factors. Interacts directly with p53/TP53. Interacts with GCN5L2. Component of various HAT complexes. Component of the PCAF complex, at least composed of TADA2L/ADA2, SUPT3H, TADA3L/ADA3, TAF5L/PAF65-beta, TAF6L/PAF65-alpha, TAF10/TAFII30, TAF12/TAFII20, TAF9/TAFII31 and TRRAP. Component of the TFTC-HAT complex, at least composed of TAF5L, TAF6L, TADA3L, SUPT3H/SPT3, TAF2/TAFII150, TAF4/TAFII135, TAF5/TAFII100, GCN5L2/GCN5, TAF10 and TRRAP. Component of the NuA4 histone acetyltransferase complex which contains the catalytic subunit KAT5/TIP60 and the subunits EP400, TRRAP/PAF400, BRD8/SMAP, EPC1, DMAP1/DNMAP1, RUVBL1/TIP49, RUVBL2, ING3, actin, ACTL6A/BAF53A, MORF4L1/MRG15, MORF4L2/MRGX, MRGBP, YEATS4/GAS41, VPS72/YL1 and MEAF6. Component of the STAGA complex, at least composed of SUPT3H, GCN5L2, SUPT7L, TAF5L, TAF6L, TADA3L, TAD1L, TAF10, TAF12, TRRAP and TAF9. The STAGA core complex is associated with a subcomplex required for histone deubiquitination composed of ATXN7L3, ENY2 and USP22. Component of the BAF53 complex, at least composed of BAF53A, RUVBL1, SMARCA4/BRG1, and TRRAP, which preferentially acetylates histone H4 (and H2A) within nucleosomes. Interacts with NPAT. Interaction with TELO2 and TTI1. Component of a SWR1-like complex.

Its subcellular location is the nucleus. Functionally, adapter protein, which is found in various multiprotein chromatin complexes with histone acetyltransferase activity (HAT), which gives a specific tag for epigenetic transcription activation. Component of the NuA4 histone acetyltransferase complex which is responsible for acetylation of nucleosomal histones H4 and H2A. Plays a central role in MYC transcription activation, and also participates in cell transformation by MYC. Required for p53/TP53-, E2F1- and E2F4-mediated transcription activation. Also involved in transcription activation mediated by the adenovirus E1A, a viral oncoprotein that deregulates transcription of key genes. Probably acts by linking transcription factors such as E1A, MYC or E2F1 to HAT complexes such as STAGA thereby allowing transcription activation. Probably not required in the steps following histone acetylation in processes of transcription activation. May be required for the mitotic checkpoint and normal cell cycle progression. Component of a SWR1-like complex that specifically mediates the removal of histone H2A.Z/H2AZ1 from the nucleosome. May play a role in the formation and maintenance of the auditory system. The chain is Transformation/transcription domain-associated protein (TRRAP) from Homo sapiens (Human).